Consider the following 717-residue polypeptide: Fatty acid oxidation complex subunit alpha (717 aa).

The interval 1–190 (MIHAGNAITV…KDGAVDAVVS (190 aa)) is enoyl-CoA hydratase/isomerase. Asp-298 contacts substrate. The segment at 313 to 717 (HPVNQAAVLG…MAENNKKFYG (405 aa)) is 3-hydroxyacyl-CoA dehydrogenase. NAD(+) is bound by residues Met-326, Asp-345, 402 to 404 (VTE), Lys-409, and Ser-431. The active-site For 3-hydroxyacyl-CoA dehydrogenase activity is the His-452. Asn-455 provides a ligand contact to NAD(+). Residue Asn-502 participates in substrate binding.

This sequence in the N-terminal section; belongs to the enoyl-CoA hydratase/isomerase family. It in the C-terminal section; belongs to the 3-hydroxyacyl-CoA dehydrogenase family. Heterotetramer of two alpha chains (FadB) and two beta chains (FadA).

It carries out the reaction a (3S)-3-hydroxyacyl-CoA + NAD(+) = a 3-oxoacyl-CoA + NADH + H(+). The enzyme catalyses a (3S)-3-hydroxyacyl-CoA = a (2E)-enoyl-CoA + H2O. The catalysed reaction is a 4-saturated-(3S)-3-hydroxyacyl-CoA = a (3E)-enoyl-CoA + H2O. It catalyses the reaction (3S)-3-hydroxybutanoyl-CoA = (3R)-3-hydroxybutanoyl-CoA. It carries out the reaction a (3Z)-enoyl-CoA = a 4-saturated (2E)-enoyl-CoA. The enzyme catalyses a (3E)-enoyl-CoA = a 4-saturated (2E)-enoyl-CoA. Its pathway is lipid metabolism; fatty acid beta-oxidation. Functionally, involved in the aerobic and anaerobic degradation of long-chain fatty acids via beta-oxidation cycle. Catalyzes the formation of 3-oxoacyl-CoA from enoyl-CoA via L-3-hydroxyacyl-CoA. It can also use D-3-hydroxyacyl-CoA and cis-3-enoyl-CoA as substrate. The sequence is that of Fatty acid oxidation complex subunit alpha from Acinetobacter baylyi (strain ATCC 33305 / BD413 / ADP1).